A 372-amino-acid chain; its full sequence is Cytochrome b (372 aa).

A run of 4 helical transmembrane segments spans residues 25-45 (FGSM…FLAI), 69-90 (WTMQ…YIHI), 105-125 (WLSG…GYVL), and 170-190 (FFAL…IHII). Heme b is bound by residues His75 and His89. 2 residues coordinate heme b: His174 and His188. Residue His193 participates in a ubiquinone binding. 4 consecutive transmembrane segments (helical) span residues 218–238 (YKDM…LSFS), 280–300 (LGGT…PFTH), 312–332 (LTQI…WTAT), and 339–358 (FIII…IMNP).

The protein belongs to the cytochrome b family. As to quaternary structure, the cytochrome bc1 complex contains 3 respiratory subunits (MT-CYB, CYC1 and UQCRFS1), 2 core proteins (UQCRC1 and UQCRC2) and probably 6 low-molecular weight proteins. It depends on heme b as a cofactor.

It is found in the mitochondrion inner membrane. Its function is as follows. Component of the ubiquinol-cytochrome c reductase complex (complex III or cytochrome b-c1 complex) that is part of the mitochondrial respiratory chain. The b-c1 complex mediates electron transfer from ubiquinol to cytochrome c. Contributes to the generation of a proton gradient across the mitochondrial membrane that is then used for ATP synthesis. The polypeptide is Cytochrome b (MT-CYB) (Ophiophagus hannah (King cobra)).